The following is a 146-amino-acid chain: Hemoglobin subunit beta-A/B (146 aa).

G1 carries the post-translational modification N-acetylserine; in variant beta-B. Residues 2-146 (FLTAEEKGLV…VANALAHKYH (145 aa)) form the Globin domain. S44 carries the phosphoserine modification. N6-acetyllysine is present on K59. H63 contacts heme b. N6-acetyllysine is present on K82. A heme b-binding site is contributed by H92. An S-nitrosocysteine modification is found at C93. N6-acetyllysine is present on K144.

It belongs to the globin family. As to quaternary structure, heterotetramer of two alpha chains and two beta chains. Red blood cells.

Involved in oxygen transport from the lung to the various peripheral tissues. The chain is Hemoglobin subunit beta-A/B (HBB) from Felis catus (Cat).